Here is a 516-residue protein sequence, read N- to C-terminus: Cytochrome P450 1A1 (516 aa).

Positions 25–36 (FRPQVPKGLKSP) are mitochondrial targeting signal. A glycan (O-linked (GlcNAc) serine) is linked at Ser-63. Phe-220 provides a ligand contact to substrate. Cys-453 contacts heme.

It belongs to the cytochrome P450 family. Interacts with cytosolic chaperones HSP70 and HSP90; this interaction is required for initial targeting to mitochondria. Interacts (via mitochondrial targeting signal) with TOMM40 (via N-terminus); this interaction is required for translocation across the mitochondrial outer membrane. Heme serves as cofactor. In terms of tissue distribution, constitutively expressed in liver.

The protein resides in the endoplasmic reticulum membrane. It localises to the mitochondrion inner membrane. Its subcellular location is the microsome membrane. The protein localises to the cytoplasm. The enzyme catalyses an organic molecule + reduced [NADPH--hemoprotein reductase] + O2 = an alcohol + oxidized [NADPH--hemoprotein reductase] + H2O + H(+). It carries out the reaction estrone + reduced [NADPH--hemoprotein reductase] + O2 = 2-hydroxyestrone + oxidized [NADPH--hemoprotein reductase] + H2O + H(+). The catalysed reaction is estrone + reduced [NADPH--hemoprotein reductase] + O2 = 4-hydroxyestrone + oxidized [NADPH--hemoprotein reductase] + H2O + H(+). It catalyses the reaction estrone + reduced [NADPH--hemoprotein reductase] + O2 = 6alpha-hydroxyestrone + oxidized [NADPH--hemoprotein reductase] + H2O + H(+). The enzyme catalyses estrone + reduced [NADPH--hemoprotein reductase] + O2 = 15alpha-hydroxyestrone + oxidized [NADPH--hemoprotein reductase] + H2O + H(+). It carries out the reaction estrone + reduced [NADPH--hemoprotein reductase] + O2 = 16alpha-hydroxyestrone + oxidized [NADPH--hemoprotein reductase] + H2O + H(+). The catalysed reaction is 17beta-estradiol + reduced [NADPH--hemoprotein reductase] + O2 = 2-hydroxy-17beta-estradiol + oxidized [NADPH--hemoprotein reductase] + H2O + H(+). It catalyses the reaction 17beta-estradiol + reduced [NADPH--hemoprotein reductase] + O2 = 4-hydroxy-17beta-estradiol + oxidized [NADPH--hemoprotein reductase] + H2O + H(+). The enzyme catalyses 17beta-estradiol + reduced [NADPH--hemoprotein reductase] + O2 = 6alpha-hydroxy-17beta-estradiol + oxidized [NADPH--hemoprotein reductase] + H2O + H(+). It carries out the reaction 17beta-estradiol + reduced [NADPH--hemoprotein reductase] + O2 = 7alpha-hydroxy-17beta-estradiol + oxidized [NADPH--hemoprotein reductase] + H2O + H(+). The catalysed reaction is 17beta-estradiol + reduced [NADPH--hemoprotein reductase] + O2 = 15alpha-hydroxy-17beta-estradiol + oxidized [NADPH--hemoprotein reductase] + H2O + H(+). It catalyses the reaction (5Z,8Z,11Z)-eicosatrienoate + reduced [NADPH--hemoprotein reductase] + O2 = 19-hydroxy-(5Z,8Z,11Z)-eicosatrienoate + oxidized [NADPH--hemoprotein reductase] + H2O + H(+). The enzyme catalyses (5Z,8Z,11Z,14Z)-eicosatetraenoate + reduced [NADPH--hemoprotein reductase] + O2 = 16-hydroxy-(5Z,8Z,11Z,14Z)-eicosatetraenoate + oxidized [NADPH--hemoprotein reductase] + H2O + H(+). It carries out the reaction (5Z,8Z,11Z,14Z)-eicosatetraenoate + reduced [NADPH--hemoprotein reductase] + O2 = 17-hydroxy-(5Z,8Z,11Z,14Z)-eicosatetraenoate + oxidized [NADPH--hemoprotein reductase] + H2O + H(+). The catalysed reaction is (5Z,8Z,11Z,14Z)-eicosatetraenoate + reduced [NADPH--hemoprotein reductase] + O2 = 18-hydroxy-(5Z,8Z,11Z,14Z)-eicosatetraenoate + oxidized [NADPH--hemoprotein reductase] + H2O + H(+). It catalyses the reaction (5Z,8Z,11Z,14Z)-eicosatetraenoate + reduced [NADPH--hemoprotein reductase] + O2 = 19-hydroxy-(5Z,8Z,11Z,14Z)-eicosatetraenoate + oxidized [NADPH--hemoprotein reductase] + H2O + H(+). The enzyme catalyses (5Z,8Z,11Z,14Z,17Z)-eicosapentaenoate + reduced [NADPH--hemoprotein reductase] + O2 = 19-hydroxy-(5Z,8Z,11Z,14Z,17Z)-eicosapentaenoate + oxidized [NADPH--hemoprotein reductase] + H2O + H(+). It carries out the reaction (5Z,8Z,11Z,14Z)-eicosatetraenoate + reduced [NADPH--hemoprotein reductase] + O2 = (8R,9S)-epoxy-(5Z,11Z,14Z)-eicosatrienoate + oxidized [NADPH--hemoprotein reductase] + H2O + H(+). The catalysed reaction is (5Z,8Z,11Z,14Z)-eicosatetraenoate + reduced [NADPH--hemoprotein reductase] + O2 = (11R,12S)-epoxy-(5Z,8Z,14Z)-eicosatrienoate + oxidized [NADPH--hemoprotein reductase] + H2O + H(+). It catalyses the reaction (5Z,8Z,11Z,14Z)-eicosatetraenoate + reduced [NADPH--hemoprotein reductase] + O2 = (14S,15R)-epoxy-(5Z,8Z,11Z)-eicosatrienoate + oxidized [NADPH--hemoprotein reductase] + H2O + H(+). The enzyme catalyses (5Z,8Z,11Z,14Z)-eicosatetraenoate + reduced [NADPH--hemoprotein reductase] + O2 = (14R,15S)-epoxy-(5Z,8Z,11Z)-eicosatrienoate + oxidized [NADPH--hemoprotein reductase] + H2O + H(+). It carries out the reaction (5Z,8Z,11Z,14Z,17Z)-eicosapentaenoate + reduced [NADPH--hemoprotein reductase] + O2 = (17R,18S)-epoxy-(5Z,8Z,11Z,14Z)-eicosatetraenoate + oxidized [NADPH--hemoprotein reductase] + H2O + H(+). The catalysed reaction is (4Z,7Z,10Z,13Z,16Z,19Z)-docosahexaenoate + reduced [NADPH--hemoprotein reductase] + O2 = (19S,20R)-epoxy-(4Z,7Z,10Z,13Z,16Z)-docosapentaenoate + oxidized [NADPH--hemoprotein reductase] + H2O + H(+). It catalyses the reaction (4Z,7Z,10Z,13Z,16Z,19Z)-docosahexaenoate + reduced [NADPH--hemoprotein reductase] + O2 = (19R,20S)-epoxy-(4Z,7Z,10Z,13Z,16Z)-docosapentaenoate + oxidized [NADPH--hemoprotein reductase] + H2O + H(+). The enzyme catalyses all-trans-retinol + reduced [NADPH--hemoprotein reductase] + O2 = all-trans-retinal + oxidized [NADPH--hemoprotein reductase] + 2 H2O + H(+). It carries out the reaction all-trans-retinal + reduced [NADPH--hemoprotein reductase] + O2 = all-trans-retinoate + oxidized [NADPH--hemoprotein reductase] + H2O + 2 H(+). The catalysed reaction is (13S)-hydroperoxy-(9Z,11E)-octadecadienoate = 13-oxo-(9Z,11E)-octadecadienoate + H2O. It catalyses the reaction (12S)-hydroperoxy-(5Z,8Z,10E,14Z)-eicosatetraenoate = 12-oxo-(5Z,8Z,10E,14Z)-eicosatetraenoate + H2O. The enzyme catalyses (15S)-hydroperoxy-(5Z,8Z,11Z,13E)-eicosatetraenoate = 15-oxo-(5Z,8Z,11Z,13E)-eicosatetraenoate + H2O. It carries out the reaction (5S)-hydroperoxy-(6E,8Z,11Z,14Z)-eicosatetraenoate = 5-oxo-(6E,8Z,11Z,14Z)-eicosatetraenoate + H2O. It functions in the pathway steroid hormone biosynthesis. The protein operates within lipid metabolism; fatty acid metabolism. It participates in cofactor metabolism; retinol metabolism. A cytochrome P450 monooxygenase involved in the metabolism of various endogenous substrates, including fatty acids, steroid hormones and vitamins. Mechanistically, uses molecular oxygen inserting one oxygen atom into a substrate, and reducing the second into a water molecule, with two electrons provided by NADPH via cytochrome P450 reductase (CPR; NADPH-ferrihemoprotein reductase). Catalyzes the hydroxylation of carbon-hydrogen bonds. Exhibits high catalytic activity for the formation of hydroxyestrogens from estrone (E1) and 17beta-estradiol (E2), namely 2-hydroxy E1 and E2, as well as D-ring hydroxylated E1 and E2 at the C15alpha and C16alpha positions. Displays different regioselectivities for polyunsaturated fatty acids (PUFA) hydroxylation. Catalyzes the epoxidation of double bonds of certain PUFA. Converts arachidonic acid toward epoxyeicosatrienoic acid (EET) regioisomers, 8,9-, 11,12-, and 14,15-EET, that function as lipid mediators in the vascular system. Displays an absolute stereoselectivity in the epoxidation of eicosapentaenoic acid (EPA) producing the 17(R),18(S) enantiomer. May play an important role in all-trans retinoic acid biosynthesis in extrahepatic tissues. Catalyzes two successive oxidative transformation of all-trans retinol to all-trans retinal and then to the active form all-trans retinoic acid. May also participate in eicosanoids metabolism by converting hydroperoxide species into oxo metabolites (lipoxygenase-like reaction, NADPH-independent). This chain is Cytochrome P450 1A1 (CYP1A1), found in Cavia porcellus (Guinea pig).